The sequence spans 358 residues: Uroporphyrinogen decarboxylase (358 aa).

Substrate contacts are provided by residues 29 to 33, F48, D79, Y155, S210, and H330; that span reads RQAGR.

This sequence belongs to the uroporphyrinogen decarboxylase family. In terms of assembly, homodimer.

It is found in the cytoplasm. The enzyme catalyses uroporphyrinogen III + 4 H(+) = coproporphyrinogen III + 4 CO2. It functions in the pathway porphyrin-containing compound metabolism; protoporphyrin-IX biosynthesis; coproporphyrinogen-III from 5-aminolevulinate: step 4/4. In terms of biological role, catalyzes the decarboxylation of four acetate groups of uroporphyrinogen-III to yield coproporphyrinogen-III. This is Uroporphyrinogen decarboxylase from Bordetella parapertussis (strain 12822 / ATCC BAA-587 / NCTC 13253).